A 160-amino-acid chain; its full sequence is Ureidoglycolate lyase (160 aa).

The protein belongs to the ureidoglycolate lyase family. In terms of assembly, homodimer. It depends on Ni(2+) as a cofactor.

It carries out the reaction (S)-ureidoglycolate = urea + glyoxylate. Its pathway is nitrogen metabolism; (S)-allantoin degradation. Catalyzes the catabolism of the allantoin degradation intermediate (S)-ureidoglycolate, generating urea and glyoxylate. Involved in the utilization of allantoin as nitrogen source. This chain is Ureidoglycolate lyase, found in Salmonella agona (strain SL483).